The chain runs to 473 residues: Photosystem II CP43 reaction center protein (473 aa).

The propeptide occupies 1–14 (MKTLYSLRRFYHVE). The residue at position 15 (Thr15) is an N-acetylthreonine. Thr15 carries the post-translational modification Phosphothreonine. Transmembrane regions (helical) follow at residues 69 to 93 (LFEVAHFVPEKPMYEQGLILLPHLA), 134 to 155 (LLGPETLEESFPFFGYVWKDRN), 178 to 200 (KALYFGGVYDTWAPGGGDVRKIT), 255 to 275 (KPFAWARRALVWSGEAYLSYS), and 291 to 312 (WFNNTAYPSEFYGPTGPEASQA). Glu367 contacts [CaMn4O5] cluster. A helical transmembrane segment spans residues 447-471 (RARAAAAGFEKGIDRDFEPVLSMTP).

The protein belongs to the PsbB/PsbC family. PsbC subfamily. PSII is composed of 1 copy each of membrane proteins PsbA, PsbB, PsbC, PsbD, PsbE, PsbF, PsbH, PsbI, PsbJ, PsbK, PsbL, PsbM, PsbT, PsbX, PsbY, PsbZ, Psb30/Ycf12, at least 3 peripheral proteins of the oxygen-evolving complex and a large number of cofactors. It forms dimeric complexes. It depends on Binds multiple chlorophylls and provides some of the ligands for the Ca-4Mn-5O cluster of the oxygen-evolving complex. It may also provide a ligand for a Cl- that is required for oxygen evolution. PSII binds additional chlorophylls, carotenoids and specific lipids. as a cofactor.

It is found in the plastid. The protein localises to the chloroplast thylakoid membrane. Its function is as follows. One of the components of the core complex of photosystem II (PSII). It binds chlorophyll and helps catalyze the primary light-induced photochemical processes of PSII. PSII is a light-driven water:plastoquinone oxidoreductase, using light energy to abstract electrons from H(2)O, generating O(2) and a proton gradient subsequently used for ATP formation. The sequence is that of Photosystem II CP43 reaction center protein from Crucihimalaya wallichii (Rock-cress).